Here is a 201-residue protein sequence, read N- to C-terminus: Small ribosomal subunit protein uS4c (201 aa).

The tract at residues 14 to 43 is disordered; the sequence is RLGALPGLTSKRPRAGSDLRNQSRPGKKSQ. In terms of domain architecture, S4 RNA-binding spans 89–169; sequence MRLDNILFRL…LPKHLTFHTL (81 aa).

Belongs to the universal ribosomal protein uS4 family. Part of the 30S ribosomal subunit. Contacts protein S5. The interaction surface between S4 and S5 is involved in control of translational fidelity.

The protein resides in the plastid. Its subcellular location is the chloroplast. In terms of biological role, one of the primary rRNA binding proteins, it binds directly to 16S rRNA where it nucleates assembly of the body of the 30S subunit. With S5 and S12 plays an important role in translational accuracy. The sequence is that of Small ribosomal subunit protein uS4c (rps4) from Gossypium hirsutum (Upland cotton).